Here is a 276-residue protein sequence, read N- to C-terminus: Phosphate import ATP-binding protein PstB 2 (276 aa).

Residues 22 to 262 (MAAVNLTLGF…PKHAETARYV (241 aa)) form the ABC transporter domain. 54–61 (GPTGSGKT) serves as a coordination point for ATP.

Belongs to the ABC transporter superfamily. Phosphate importer (TC 3.A.1.7) family. As to quaternary structure, the complex is composed of two ATP-binding proteins (PstB), two transmembrane proteins (PstC and PstA) and a solute-binding protein (PstS).

It localises to the cell membrane. The catalysed reaction is phosphate(out) + ATP + H2O = ADP + 2 phosphate(in) + H(+). Its function is as follows. Part of the ABC transporter complex PstSACB involved in phosphate import. Responsible for energy coupling to the transport system. This is Phosphate import ATP-binding protein PstB 2 from Mycobacterium bovis (strain ATCC BAA-935 / AF2122/97).